Consider the following 331-residue polypeptide: Pantothenate kinase (331 aa).

Residue 109–116 (GSVAVGKS) coordinates ATP.

This sequence belongs to the prokaryotic pantothenate kinase family.

Its subcellular location is the cytoplasm. It carries out the reaction (R)-pantothenate + ATP = (R)-4'-phosphopantothenate + ADP + H(+). The protein operates within cofactor biosynthesis; coenzyme A biosynthesis; CoA from (R)-pantothenate: step 1/5. This Rhizobium rhizogenes (strain K84 / ATCC BAA-868) (Agrobacterium radiobacter) protein is Pantothenate kinase.